The following is a 697-amino-acid chain: Transmembrane protein 168 (697 aa).

3 consecutive transmembrane segments (helical) span residues 36-56 (LGYL…YVRW), 63-83 (LILV…ILYY), and 89-109 (AASL…LCFL). N111 carries N-linked (GlcNAc...) asparagine glycosylation. 7 helical membrane-spanning segments follow: residues 172–192 (MLVE…MLII), 199–219 (FLAI…SLET), 223–243 (PIAF…DIYF), 265–285 (LSVV…AFKL), 293–313 (FVIP…IIFL), 352–372 (FCLI…ILGA), and 380–400 (GIFL…HGLF). N-linked (GlcNAc...) asparagine glycosylation is found at N533 and N598. A helical transmembrane segment spans residues 646–666 (ITYPLVHLANWLCGLNLFWIC).

The protein belongs to the TMEM168 family.

It is found in the nucleus membrane. In terms of biological role, plays a key role in maintaining the cardiac electrical stability by modulating cell surface expression of SCN5A. May play a role in the modulation of anxiety behavior by regulating GABAergic neuronal system in the nucleus accumbens. The polypeptide is Transmembrane protein 168 (Homo sapiens (Human)).